The sequence spans 65 residues: Small ribosomal subunit protein eS27 (65 aa).

The Zn(2+) site is built by Cys-21, Cys-24, Cys-40, and Cys-43. The C4-type zinc-finger motif lies at 21–43 (CKDCGNVQVVFARPSSVVTCNIC).

The protein belongs to the eukaryotic ribosomal protein eS27 family. Part of the 30S ribosomal subunit. Zn(2+) is required as a cofactor.

This chain is Small ribosomal subunit protein eS27, found in Thermoplasma volcanium (strain ATCC 51530 / DSM 4299 / JCM 9571 / NBRC 15438 / GSS1).